The following is a 635-amino-acid chain: Probable extracellular metalloproteinase 1 (635 aa).

The signal sequence occupies residues 1 to 19 (MHGLLLAAGLLSLPLHVLA). Positions 20-246 (HPQPSTSTSL…VHNVVDYVAH (227 aa)) are excised as a propeptide. Asparagine 287 is a glycosylation site (N-linked (GlcNAc...) asparagine). Histidine 430 is a binding site for Zn(2+). Residue glutamate 431 is part of the active site. Position 434 (histidine 434) interacts with Zn(2+). N-linked (GlcNAc...) asparagine glycosylation is found at asparagine 475, asparagine 594, and asparagine 623.

This sequence belongs to the peptidase M36 family. Requires Zn(2+) as cofactor.

The protein resides in the secreted. Secreted metalloproteinase probably acting as a virulence factor. The sequence is that of Probable extracellular metalloproteinase 1 (MEP1) from Trichophyton verrucosum (strain HKI 0517).